A 557-amino-acid chain; its full sequence is Protein PECTIC ARABINOGALACTAN SYNTHESIS-RELATED (557 aa).

The tract at residues 1–54 (MAELRHSSSLGSRSSSSPLRAAGDEDSSSPHVHDHSPNGGDDEDGRPRHPSRDR) is disordered. Topologically, residues 1 to 79 (MAELRHSSSL…DPRVSPQKNK (79 aa)) are cytoplasmic. Over residues 7-20 (SSSLGSRSSSSPLR) the composition is skewed to low complexity. The span at 45 to 54 (GRPRHPSRDR) shows a compositional bias: basic and acidic residues. Residues 80-100 (ISLLLILILAIASLISVYGII) form a helical; Signal-anchor for type II membrane protein membrane-spanning segment. At 101–557 (NHLNAPYLCK…NPLTPCMCKA (457 aa)) the chain is on the lumenal side. Asparagine 156, asparagine 188, and asparagine 324 each carry an N-linked (GlcNAc...) asparagine glycan. 336–338 (HLR) serves as a coordination point for substrate. A glycan (N-linked (GlcNAc...) asparagine) is linked at asparagine 375.

The protein belongs to the glycosyltransferase GT106 family. As to expression, widely expressed with the highest expression in reproductive tissues and roots.

It localises to the golgi apparatus membrane. The protein operates within glycan metabolism; pectin biosynthesis. In terms of biological role, glycosyltransferase involved in the biosynthesis of pectic type-II arabinogalactans. The chain is Protein PECTIC ARABINOGALACTAN SYNTHESIS-RELATED from Arabidopsis thaliana (Mouse-ear cress).